The chain runs to 330 residues: MEEEDMFDLLKKFTGIVGVSGNEEEIREAIIEEIKECVDEIKVDTLGNLIAVKKGKGKKIMVAAHMDEIGVMVTYIDDKGFLRFSAVGGVSRYDCIGQRVKFKNGVVGAVYYEEKLEDMKNLQLSKMYIDIGARSREEALKMVNIGDVACFVGDAVLQGDTVISKALDNRSGCAVVVKAIKELKKTDNEIYFVFTVQEEVGLRGAKTAAFSIKPDIAIAVDVTMTGDTPESHPMEVKCGGGPAIKVKDRSVICHPEVRKLLEESAKRNNIPYQLEILEAGGSDPGSIHLTAGGIPSGAISIPVRYVHSPVETASMSDINNAVKLLVEAIC.

A divalent metal cation contacts are provided by H65 and D168. Catalysis depends on E198, which acts as the Proton acceptor. Positions 199, 221, and 307 each coordinate a divalent metal cation.

Belongs to the peptidase M42 family. A divalent metal cation is required as a cofactor.

This is Putative aminopeptidase (celM) from Acetivibrio thermocellus (Hungateiclostridium thermocellum).